The sequence spans 362 residues: Alpha-2-HS-glycoprotein (362 aa).

The N-terminal stretch at 1-15 is a signal peptide; sequence LILFFCLAQLWGCRA. The Cystatin fetuin-A-type 1 domain maps to 24–130; it reads YREPACDDVE…QFSVLFAKCD (107 aa). 6 cysteine pairs are disulfide-bonded: Cys-29–Cys-353, Cys-86–Cys-97, Cys-111–Cys-129, Cys-143–Cys-146, Cys-205–Cys-216, and Cys-227–Cys-244. Asn-96 carries N-linked (GlcNAc...) asparagine glycosylation. 3 positions are modified to phosphoserine: Ser-131, Ser-132, and Ser-135. In terms of domain architecture, Cystatin fetuin-A-type 2 spans 141-252; the sequence is KVCPNCPLLA…TCTVFQTQPV (112 aa). N-linked (GlcNAc...) asparagine glycans are attached at residues Asn-153 and Asn-173. Residues Ser-314, Ser-318, Ser-321, and Ser-323 each carry the phosphoserine modification. A glycan (O-linked (GalNAc...) threonine) is linked at Thr-332.

Belongs to the fetuin family. In terms of processing, phosphorylated by FAM20C in the extracellular medium. As to expression, expressed by the liver and secreted in plasma.

Its subcellular location is the secreted. This Sus scrofa (Pig) protein is Alpha-2-HS-glycoprotein (AHSG).